The following is a 242-amino-acid chain: Biosynthetic peptidoglycan transglycosylase (242 aa).

The chain crosses the membrane as a helical span at residues 19 to 39; that stretch reads LMVVLAVFWGGGIALFSVAPV.

Belongs to the glycosyltransferase 51 family.

The protein localises to the cell inner membrane. It carries out the reaction [GlcNAc-(1-&gt;4)-Mur2Ac(oyl-L-Ala-gamma-D-Glu-L-Lys-D-Ala-D-Ala)](n)-di-trans,octa-cis-undecaprenyl diphosphate + beta-D-GlcNAc-(1-&gt;4)-Mur2Ac(oyl-L-Ala-gamma-D-Glu-L-Lys-D-Ala-D-Ala)-di-trans,octa-cis-undecaprenyl diphosphate = [GlcNAc-(1-&gt;4)-Mur2Ac(oyl-L-Ala-gamma-D-Glu-L-Lys-D-Ala-D-Ala)](n+1)-di-trans,octa-cis-undecaprenyl diphosphate + di-trans,octa-cis-undecaprenyl diphosphate + H(+). The protein operates within cell wall biogenesis; peptidoglycan biosynthesis. Its function is as follows. Peptidoglycan polymerase that catalyzes glycan chain elongation from lipid-linked precursors. The protein is Biosynthetic peptidoglycan transglycosylase of Escherichia coli (strain ATCC 8739 / DSM 1576 / NBRC 3972 / NCIMB 8545 / WDCM 00012 / Crooks).